We begin with the raw amino-acid sequence, 156 residues long: Ribosomal RNA large subunit methyltransferase H (156 aa).

S-adenosyl-L-methionine contacts are provided by residues Leu-73, Gly-104, and 123–128 (VSSLTL).

This sequence belongs to the RNA methyltransferase RlmH family. As to quaternary structure, homodimer.

The protein localises to the cytoplasm. It carries out the reaction pseudouridine(1915) in 23S rRNA + S-adenosyl-L-methionine = N(3)-methylpseudouridine(1915) in 23S rRNA + S-adenosyl-L-homocysteine + H(+). Functionally, specifically methylates the pseudouridine at position 1915 (m3Psi1915) in 23S rRNA. The polypeptide is Ribosomal RNA large subunit methyltransferase H (Paraburkholderia xenovorans (strain LB400)).